We begin with the raw amino-acid sequence, 86 residues long: Omega-theraphotoxin-Hhn1b (86 aa).

The N-terminal stretch at 1 to 21 (MKSIVFVALFGLALLAVVCSA) is a signal peptide. Positions 22–50 (SEDAHKELLKEVVRAMVVDKTDAVQAEER) are excised as a propeptide. Cystine bridges form between Cys52–Cys66, Cys59–Cys71, and Cys65–Cys78.

Belongs to the neurotoxin 10 (Hwtx-1) family. 17 (Hntx-9) subfamily. Expressed by the venom gland.

The protein localises to the secreted. Its function is as follows. Ion channel inhibitor. This chain is Omega-theraphotoxin-Hhn1b, found in Cyriopagopus hainanus (Chinese bird spider).